A 377-amino-acid chain; its full sequence is Phospho-N-acetylmuramoyl-pentapeptide-transferase (377 aa).

Transmembrane regions (helical) follow at residues 9–29 (YITLRAVLACATALLIGLVAG), 62–82 (MGGALILIAIAISTLLWADWI), 85–105 (FVWVVLLVTFGFGWIGWMDDY), 122–142 (FFWQATIGLVAAVYLAFAVSA), 155–175 (WVGSGFTMPLPTRADLIVPFF), 178–198 (VSYPLGVLGFVALTWAVIVGT), 210–230 (GLAIMPTVMVGSALGIFAYVV), 247–267 (AAELMVLCAAIGGAGLAFLWF), 274–294 (VFMGDVGALALGGALGTIAVI), 299–319 (IVLFIMGGVFVVETLSVMVQV), and 354–374 (QVVVRFWIITMMLVLVGLSTL).

It belongs to the glycosyltransferase 4 family. MraY subfamily. Requires Mg(2+) as cofactor.

The protein localises to the cell inner membrane. It carries out the reaction UDP-N-acetyl-alpha-D-muramoyl-L-alanyl-gamma-D-glutamyl-meso-2,6-diaminopimeloyl-D-alanyl-D-alanine + di-trans,octa-cis-undecaprenyl phosphate = di-trans,octa-cis-undecaprenyl diphospho-N-acetyl-alpha-D-muramoyl-L-alanyl-D-glutamyl-meso-2,6-diaminopimeloyl-D-alanyl-D-alanine + UMP. The protein operates within cell wall biogenesis; peptidoglycan biosynthesis. In terms of biological role, catalyzes the initial step of the lipid cycle reactions in the biosynthesis of the cell wall peptidoglycan: transfers peptidoglycan precursor phospho-MurNAc-pentapeptide from UDP-MurNAc-pentapeptide onto the lipid carrier undecaprenyl phosphate, yielding undecaprenyl-pyrophosphoryl-MurNAc-pentapeptide, known as lipid I. The polypeptide is Phospho-N-acetylmuramoyl-pentapeptide-transferase (Bordetella parapertussis (strain 12822 / ATCC BAA-587 / NCTC 13253)).